Reading from the N-terminus, the 225-residue chain is LSTTCEGKDKGICNLNLALQLITDVRDNFPVCPSPPLPIDCEEVLQRDFKAIPNPIDVYCDMVTDGGGWTVIQRRGDFHGPIDYFYKDWQSYKKGFGDIEKEFWLGNENIFGLSNQRYALYDTFANDDEDHKYMLHISGYKGDAGDSMIGVHNEQKFSTKDKNDNFPGATSCAQLYKGGWWYNQCHVSNLNGQYLKSYADGVIWRSWKGYHESLGWTEIKIKDVK.

The Fibrinogen C-terminal domain maps to 32-225 (CPSPPLPIDC…WTEIKIKDVK (194 aa)). Cysteines 41 and 60 form a disulfide. Positions 75–77 (RGD) match the Cell attachment site motif. 2 residues coordinate Ca(2+): aspartate 164 and threonine 170. A disulfide bond links cysteine 172 and cysteine 185.

In terms of tissue distribution, expressed by the venom gland.

The protein localises to the secreted. In terms of biological role, lectin involved in innate immunity. The protein is Techylectin-like protein of Phoneutria nigriventer (Brazilian armed spider).